The sequence spans 367 residues: Chorismate synthase (367 aa).

Residue arginine 48 coordinates NADP(+). Residues arginine 125–serine 127, glycine 283, lysine 298–serine 302, and arginine 324 contribute to the FMN site.

Belongs to the chorismate synthase family. As to quaternary structure, homotetramer. FMNH2 serves as cofactor.

It carries out the reaction 5-O-(1-carboxyvinyl)-3-phosphoshikimate = chorismate + phosphate. It functions in the pathway metabolic intermediate biosynthesis; chorismate biosynthesis; chorismate from D-erythrose 4-phosphate and phosphoenolpyruvate: step 7/7. In terms of biological role, catalyzes the anti-1,4-elimination of the C-3 phosphate and the C-6 proR hydrogen from 5-enolpyruvylshikimate-3-phosphate (EPSP) to yield chorismate, which is the branch point compound that serves as the starting substrate for the three terminal pathways of aromatic amino acid biosynthesis. This reaction introduces a second double bond into the aromatic ring system. This Agathobacter rectalis (strain ATCC 33656 / DSM 3377 / JCM 17463 / KCTC 5835 / VPI 0990) (Eubacterium rectale) protein is Chorismate synthase.